The primary structure comprises 368 residues: tRNA-specific 2-thiouridylase MnmA (368 aa).

ATP contacts are provided by residues 10 to 17 (AMSGGIDS) and M36. The active-site Nucleophile is C106. C106 and C203 are disulfide-bonded. G130 serves as a coordination point for ATP. The segment at 152-154 (KDQ) is interaction with tRNA. C203 serves as the catalytic Cysteine persulfide intermediate. Residues 313–314 (RY) form an interaction with tRNA region.

It belongs to the MnmA/TRMU family.

It localises to the cytoplasm. The enzyme catalyses S-sulfanyl-L-cysteinyl-[protein] + uridine(34) in tRNA + AH2 + ATP = 2-thiouridine(34) in tRNA + L-cysteinyl-[protein] + A + AMP + diphosphate + H(+). In terms of biological role, catalyzes the 2-thiolation of uridine at the wobble position (U34) of tRNA, leading to the formation of s(2)U34. In Cytophaga hutchinsonii (strain ATCC 33406 / DSM 1761 / CIP 103989 / NBRC 15051 / NCIMB 9469 / D465), this protein is tRNA-specific 2-thiouridylase MnmA.